A 178-amino-acid polypeptide reads, in one-letter code: Protein GrpE (178 aa).

2 stretches are compositionally biased toward basic and acidic residues: residues 1–19 (MAKHKQEEHPEDVEVKEEA) and 30–42 (SPEKSELELANER). The segment at 1 to 42 (MAKHKQEEHPEDVEVKEEAVETAEQAESASPEKSELELANER) is disordered.

This sequence belongs to the GrpE family. In terms of assembly, homodimer.

It localises to the cytoplasm. Its function is as follows. Participates actively in the response to hyperosmotic and heat shock by preventing the aggregation of stress-denatured proteins, in association with DnaK and GrpE. It is the nucleotide exchange factor for DnaK and may function as a thermosensor. Unfolded proteins bind initially to DnaJ; upon interaction with the DnaJ-bound protein, DnaK hydrolyzes its bound ATP, resulting in the formation of a stable complex. GrpE releases ADP from DnaK; ATP binding to DnaK triggers the release of the substrate protein, thus completing the reaction cycle. Several rounds of ATP-dependent interactions between DnaJ, DnaK and GrpE are required for fully efficient folding. The protein is Protein GrpE of Streptococcus sanguinis (strain SK36).